A 115-amino-acid polypeptide reads, in one-letter code: Succinate dehydrogenase hydrophobic membrane anchor subunit (115 aa).

At 1–15 the chain is on the cytoplasmic side; that stretch reads MVSNASALGRNGVHD. The chain crosses the membrane as a helical span at residues 16-36; sequence FILVRATAIVLTLYIIYMVGF. Topologically, residues 37–58 are periplasmic; it reads FATSGELTYEVWIGFFASAFTK. The helical transmembrane segment at 59–80 threads the bilayer; that stretch reads VFTLLALFSILIHAWIGMWQVL. Residue His-71 participates in heme binding. The Cytoplasmic portion of the chain corresponds to 81–90; sequence TDYVKPLALR. A ubiquinone is bound at residue Tyr-83. A helical transmembrane segment spans residues 91–115; it reads LMLQLVIVVALVVYVIYGFVVVWGV.

In terms of assembly, part of an enzyme complex containing four subunits: a flavoprotein, an iron-sulfur protein, plus two membrane-anchoring proteins, SdhC and SdhD. The complex can form homotrimers. Heme serves as cofactor.

It localises to the cell inner membrane. Its pathway is carbohydrate metabolism; tricarboxylic acid cycle. In terms of biological role, membrane-anchoring subunit of succinate dehydrogenase (SDH). The chain is Succinate dehydrogenase hydrophobic membrane anchor subunit (sdhD) from Escherichia coli O6:H1 (strain CFT073 / ATCC 700928 / UPEC).